A 207-amino-acid polypeptide reads, in one-letter code: Small ribosomal subunit protein uS4 (207 aa).

The tract at residues 31-51 is disordered; the sequence is KCKLDSKPGQHGRTSGARTSD. Residues 97-162 enclose the S4 RNA-binding domain; that stretch reads SRLDNVVYRM…QGRIRESLDL (66 aa).

This sequence belongs to the universal ribosomal protein uS4 family. As to quaternary structure, part of the 30S ribosomal subunit. Contacts protein S5. The interaction surface between S4 and S5 is involved in control of translational fidelity.

In terms of biological role, one of the primary rRNA binding proteins, it binds directly to 16S rRNA where it nucleates assembly of the body of the 30S subunit. Functionally, with S5 and S12 plays an important role in translational accuracy. This Bordetella bronchiseptica (strain ATCC BAA-588 / NCTC 13252 / RB50) (Alcaligenes bronchisepticus) protein is Small ribosomal subunit protein uS4.